A 478-amino-acid polypeptide reads, in one-letter code: Dihydrolipoyl dehydrogenase (478 aa).

Residues 36–45 (ERYSTLGGVC), K54, and A117 each bind FAD. An intrachain disulfide couples C45 to C50. Residues 183–187 (GGGII), E206, V239, and 270–273 (AIGR) each bind NAD(+). 2 residues coordinate FAD: D313 and A321. The active-site Proton acceptor is the H445.

The protein belongs to the class-I pyridine nucleotide-disulfide oxidoreductase family. In terms of assembly, homodimer. The cofactor is FAD.

The protein resides in the cytoplasm. It carries out the reaction N(6)-[(R)-dihydrolipoyl]-L-lysyl-[protein] + NAD(+) = N(6)-[(R)-lipoyl]-L-lysyl-[protein] + NADH + H(+). Its function is as follows. Lipoamide dehydrogenase is a component of the alpha-ketoacid dehydrogenase complexes. The sequence is that of Dihydrolipoyl dehydrogenase (lpdA) from Haemophilus influenzae (strain ATCC 51907 / DSM 11121 / KW20 / Rd).